A 249-amino-acid polypeptide reads, in one-letter code: Aspartate/glutamate leucyltransferase (249 aa).

The protein belongs to the R-transferase family. Bpt subfamily.

It localises to the cytoplasm. The enzyme catalyses N-terminal L-glutamyl-[protein] + L-leucyl-tRNA(Leu) = N-terminal L-leucyl-L-glutamyl-[protein] + tRNA(Leu) + H(+). The catalysed reaction is N-terminal L-aspartyl-[protein] + L-leucyl-tRNA(Leu) = N-terminal L-leucyl-L-aspartyl-[protein] + tRNA(Leu) + H(+). Functionally, functions in the N-end rule pathway of protein degradation where it conjugates Leu from its aminoacyl-tRNA to the N-termini of proteins containing an N-terminal aspartate or glutamate. This Brucella abortus (strain 2308) protein is Aspartate/glutamate leucyltransferase.